Here is a 776-residue protein sequence, read N- to C-terminus: Isoamylase (776 aa).

The signal sequence occupies residues 1-26 (MKCPKILAALLGCAVLAGVPAMPAHA). Residues aspartate 154, glutamate 255, threonine 256, asparagine 258, and aspartate 285 each coordinate Ca(2+). Aspartate 401 functions as the Nucleophile in the catalytic mechanism. A disulfide bond links cysteine 410 and cysteine 422. Glutamate 461 acts as the Proton donor in catalysis. Cystine bridges form between cysteine 546–cysteine 616 and cysteine 738–cysteine 766.

Belongs to the glycosyl hydrolase 13 family. Monomer. It depends on Ca(2+) as a cofactor.

Its subcellular location is the secreted. The catalysed reaction is Hydrolysis of (1-&gt;6)-alpha-D-glucosidic branch linkages in glycogen, amylopectin and their beta-limit dextrins.. This chain is Isoamylase (iam), found in Pseudomonas amyloderamosa.